The primary structure comprises 1181 residues: Clustered mitochondria protein homolog (1181 aa).

A disordered region spans residues 165 to 195 (AKAEALAKNEEVSEDEESEPEDDTPMKQSTQ). Over residues 176 to 187 (VSEDEESEPEDD) the composition is skewed to acidic residues. One can recognise a Clu domain in the interval 379 to 622 (DMARNQELLS…RLAPVDIAFL (244 aa)). Residues 1130 to 1181 (GRLARQAPKPTATHQKEAPKKASKKTKGKGKGKDDKGEKLVAELKKKKAGKR) form a disordered region. Residues 1150-1159 (KASKKTKGKG) are compositionally biased toward basic residues. Positions 1160–1173 (KGKDDKGEKLVAEL) are enriched in basic and acidic residues.

It belongs to the CLU family. As to quaternary structure, may associate with the eukaryotic translation initiation factor 3 (eIF-3) complex.

Its subcellular location is the cytoplasm. Functionally, mRNA-binding protein involved in proper cytoplasmic distribution of mitochondria. In Yarrowia lipolytica (strain CLIB 122 / E 150) (Yeast), this protein is Clustered mitochondria protein homolog.